The primary structure comprises 282 residues: Pantothenate synthetase (282 aa).

ATP is bound at residue 29–36 (MGFLHEGH). Catalysis depends on His-36, which acts as the Proton donor. Gln-60 contributes to the (R)-pantoate binding site. Beta-alanine is bound at residue Gln-60. 146 to 149 (GEKD) contributes to the ATP binding site. Gln-152 provides a ligand contact to (R)-pantoate. ATP is bound by residues Ile-175 and 183–186 (KSSR).

It belongs to the pantothenate synthetase family. Homodimer.

Its subcellular location is the cytoplasm. It catalyses the reaction (R)-pantoate + beta-alanine + ATP = (R)-pantothenate + AMP + diphosphate + H(+). It functions in the pathway cofactor biosynthesis; (R)-pantothenate biosynthesis; (R)-pantothenate from (R)-pantoate and beta-alanine: step 1/1. Functionally, catalyzes the condensation of pantoate with beta-alanine in an ATP-dependent reaction via a pantoyl-adenylate intermediate. The sequence is that of Pantothenate synthetase from Clostridioides difficile (strain 630) (Peptoclostridium difficile).